We begin with the raw amino-acid sequence, 1262 residues long: Synaptopodin-2 (1262 aa).

Residues 1–174 are interaction with VPS18; it reads MGTGDFICIS…PGSQEGHLVE (174 aa). The region spanning 6-88 is the PDZ domain; it reads FICISMTGGA…SLHLLIKRPT (83 aa). Composition is skewed to polar residues over residues 89 to 105 and 246 to 260; these read SGTSEALDSETENTNHQ and TSLTSGTTVQTSSGR. Disordered regions lie at residues 89 to 114 and 239 to 276; these read SGTSEALDSETENTNHQHLPHGGPME and PAPEKADTSLTSGTTVQTSSGRELTVIQGRDPGGTGLP. 3 positions are modified to phosphoserine: Ser-304, Ser-323, and Ser-324. A disordered region spans residues 323 to 363; the sequence is SSEGTEQGEDQRSGKDQGRPHKHRARHARLRRSESLSEKQV. Thr-327 is modified (phosphothreonine). Over residues 331–341 the composition is skewed to basic and acidic residues; the sequence is EDQRSGKDQGR. Residues 342–352 show a composition bias toward basic residues; that stretch reads PHKHRARHARL. The span at 353–363 shows a compositional bias: basic and acidic residues; it reads RRSESLSEKQV. The Nuclear localization signal motif lies at 392–400; it reads KKRRRRARK. Interaction with ACTN2 stretches follow at residues 477 to 658, 659 to 922, and 899 to 1153; these read MEML…FYDS, SEQI…PPVA, and QSPT…NIEE. Disordered regions lie at residues 503–576 and 592–703; these read AQNE…GPQR and NQTA…SPNP. Phosphoserine occurs at positions 518, 543, 544, 546, and 549. 2 F-actin binding regions span residues 530-658 and 659-801; these read TSYQ…FYDS and SEQI…VTAV. The span at 540–552 shows a compositional bias: low complexity; the sequence is RMQSSVSESSFQM. Residues 554 to 560 form an interaction with YWHAB region; that stretch reads RSLGSVP. At Ser-558 the chain carries Phosphoserine; by PKA. Composition is skewed to polar residues over residues 558–569 and 592–606; these read SVPQQNGFSGVS and NQTAAPFSPTQSVTS. Residue Ser-599 is modified to Phosphoserine. The interval 602–809 is interaction with YWHAB; the sequence is QSVTSPIPDF…AVSSIKIAQP (208 aa). The residue at position 605 (Thr-605) is a Phosphothreonine; by PKA and CaMK2. At Ser-606 the chain carries Phosphoserine. Pro residues-rich tracts occupy residues 609 to 625 and 639 to 650; these read PDFPAPPPYSAVSPPPE and AQPPPWPQPAPW. The interaction with BAG3 stretch occupies residues 610–621; that stretch reads DFPAPPPYSAVS. Positions 614 to 617 match the PPPY motif motif; it reads PPPY. The residue at position 617 (Tyr-617) is a Phosphotyrosine. Ser-621 is subject to Phosphoserine. The tract at residues 659-914 is F-actin bundling activity; the sequence is SEQIASRDER…LPASWKYSSN (256 aa). Residues Ser-700 and Ser-724 each carry the phosphoserine modification. Disordered regions lie at residues 741–799 and 833–868; these read MQSS…PQVT and VVSHNYTPKPSAPTPLVNAAPAGAGGPSNELPGMSG. Positions 745 to 898 are actin binding; that stretch reads AKQKTPPPVA…DTVQAHTVRA (154 aa). Position 749 is a phosphothreonine (Thr-749). Residues 756–782 are compositionally biased toward low complexity; the sequence is KPAVKTSSSSQPVAPVSPVWSPGVAPA. A phosphoserine mark is found at Ser-772 and Ser-776. Positions 786–799 are enriched in polar residues; that stretch reads AFSTTNPPNPPQVT. Positions 808 to 1153 are interaction with FLNC; the sequence is QPTCPPARPA…EAFRPRNIEE (346 aa). Residues Ser-900, Ser-904, and Ser-908 each carry the phosphoserine modification. Residues 933 to 957 are disordered; it reads LAAIKSQPPGAQASKTSKKKGKKPL. Positions 999–1018 are interaction with ZYX; it reads PAMKQALPPRQADIGSPTNA. A phosphoserine mark is found at Ser-1014, Ser-1055, and Ser-1090.

Belongs to the synaptopodin family. In terms of assembly, may self-associate in muscle cells under oxidative stress. Binds F-actin. Interacts with ACTN2; ACTN2 is proposed to anchor SYOP2 at Z lines in mature myocytes. Interacts with AKAP6, PPP3CA and CAMK2A. Interacts (phosphorylated form) with YWHAB; YWHAB competes with ACTN2 for interaction with SYNPO2. Interacts with KPNA2; mediating nuclear import of SYNOP2; dependent on interaction with YWHAB. Interacts with IPO13; may be implicated in SYNOP2 nuclear import. Interacts with ZYX, FLNC, ILK. Interacts with BAG3 (via WW 1 domain). May associate with the CASA complex consisting of HSPA8, HSPB8 and BAG3. Interacts with VPS18. In terms of processing, phosphorylated by PKA, and by CaMK2 at multiple sites. Dephosphorylated by calcineurin at Ser-558 and Thr-605; abrogating interaction with YWHAB and impairing nuclear import.

It is found in the nucleus. The protein resides in the cytoplasm. Its subcellular location is the cytoskeleton. The protein localises to the myofibril. It localises to the sarcomere. It is found in the z line. The protein resides in the cell junction. Its subcellular location is the focal adhesion. Functionally, has an actin-binding and actin-bundling activity. Can induce the formation of F-actin networks. At the sarcomeric Z lines is proposed to act as adapter protein that links nascent myofibers to the sarcolemma via ZYX and may play a role in early assembly and stabilization of the Z lines. Involved in autophagosome formation. May play a role in chaperone-assisted selective autophagy (CASA) involved in Z lines maintenance in striated muscle under mechanical tension; may link the client-processing CASA chaperone machinery to a membrane-tethering and fusion complex providing autophagosome membranes. Involved in regulation of cell migration. May be a tumor suppressor. This chain is Synaptopodin-2 (Synpo2), found in Rattus norvegicus (Rat).